A 222-amino-acid chain; its full sequence is MFEKYFPNVDLTELWNATYETLYMTLISLLFAFVIGVILGLLLFLTSKGSLWQNKAVNSVIAAVVNIFRSIPFLILIILLLGFTKFLVGTILGPNAALPALVIGSAPFYARLVEIALREVDKGVIEAAKSMGAKTSTIIFKVLIPESMPALISGITVTAIALIGSTAIAGAIGSGGLGNLAYVEGYQSNNADVTFVATVFILIIVFIIQIIGDLITNIIDKR.

An ABC transmembrane type-1 domain is found at 18–212 (TYETLYMTLI…IIVFIIQIIG (195 aa)). A run of 5 helical transmembrane segments spans residues 25-45 (TLIS…LLFL), 73-93 (FLIL…TILG), 97-117 (ALPA…EIAL), 152-172 (ISGI…AGAI), and 195-215 (FVAT…GDLI).

This sequence belongs to the binding-protein-dependent transport system permease family. CysTW subfamily. The complex is composed of two ATP-binding proteins (MetN), two transmembrane proteins (MetP) and a solute-binding protein (MetQ).

The protein localises to the cell membrane. Its function is as follows. Part of the ABC transporter complex MetNPQ involved in methionine import. Responsible for the translocation of the substrate across the membrane. It has also been shown to be involved in methionine sulfoxide transport. The protein is Methionine import system permease protein MetP (metP) of Bacillus subtilis (strain 168).